A 240-amino-acid polypeptide reads, in one-letter code: Uridylate kinase (240 aa).

ATP is bound at residue 12-15; it reads KLSG. The involved in allosteric activation by GTP stretch occupies residues 20 to 25; it reads GEQGNG. G54 lines the UMP pocket. G55 and R59 together coordinate ATP. UMP-binding positions include D74 and 135-142; that span reads TGNPYFST. Residues N163, Y169, and D172 each contribute to the ATP site.

It belongs to the UMP kinase family. As to quaternary structure, homohexamer.

The protein localises to the cytoplasm. The enzyme catalyses UMP + ATP = UDP + ADP. Its pathway is pyrimidine metabolism; CTP biosynthesis via de novo pathway; UDP from UMP (UMPK route): step 1/1. Allosterically activated by GTP. Inhibited by UTP. Functionally, catalyzes the reversible phosphorylation of UMP to UDP. In Bacillus velezensis (strain DSM 23117 / BGSC 10A6 / LMG 26770 / FZB42) (Bacillus amyloliquefaciens subsp. plantarum), this protein is Uridylate kinase.